The chain runs to 239 residues: NADH-quinone oxidoreductase chain 2 (239 aa).

[2Fe-2S] cluster contacts are provided by Cys96, Cys101, Cys137, and Cys141.

Belongs to the complex I 24 kDa subunit family. NDH-1 is composed of at least 14 different subunits, Nqo1 to Nqo14. The complex has a L-shaped structure, with the hydrophobic arm (subunits Nqo7, Nqo8, Nqo10 to Nqo14) embedded in the inner membrane and the hydrophilic peripheral arm (subunits Nqo1 to Nqo6, Nqo9) protruding into the bacterial cytoplasm. The hydrophilic domain contains all the redox centers. The cofactor is [2Fe-2S] cluster.

The protein localises to the cell inner membrane. The enzyme catalyses a quinone + NADH + 5 H(+)(in) = a quinol + NAD(+) + 4 H(+)(out). NDH-1 shuttles electrons from NADH, via FMN and iron-sulfur (Fe-S) centers, to quinones in the respiratory chain. The immediate electron acceptor for the enzyme in this species is believed to be ubiquinone. Couples the redox reaction to proton translocation (for every two electrons transferred, four hydrogen ions are translocated across the cytoplasmic membrane), and thus conserves the redox energy in a proton gradient. This chain is NADH-quinone oxidoreductase chain 2 (nqo2), found in Paracoccus denitrificans.